Consider the following 426-residue polypeptide: MSVFSNILDENSRNLRNEIPCDDGIASPINDDDEEFLTKSNRVLLVGADSNSSLKNLMTQYSYQVTKYESGEEAMAFLMKNKHEIDLVIWDFHMPDINGLDALNIIGKQMDLPVVIMSHEYKKETVMESIKYGACDFLVKPVSKEVIAVLWRHVYRKRMSKSGLDKPGESGTVESDPDEYDDLEQDNLYESNEEGSKNTCDHKEEKSPTKKPRMQWTPELHHKFEVAVEKMGSLEKAFPKTILKYMQEELNVQGLTRNNVASHLQKYRQSSKKTCTPQEPQEDFVWGNAGPDVTLAASKTLLSSHATPSYLINNQAAPRGSYFMNNIPYPSTSCLPVNNNNCFMTNPSTYIDQFQHQLQQQQQHQQYQSTLNSISAMLTKQESRHVPSSAMENSEPLMIYNSNLPFGIDECFPPAGFNIFDQIGHN.

In terms of domain architecture, Response regulatory spans 40-155; the sequence is SNRVLLVGAD…VIAVLWRHVY (116 aa). Aspartate 91 carries the post-translational modification 4-aspartylphosphate. The segment at 161–216 is disordered; that stretch reads KSGLDKPGESGTVESDPDEYDDLEQDNLYESNEEGSKNTCDHKEEKSPTKKPRMQW. The segment covering 175-193 has biased composition (acidic residues); it reads SDPDEYDDLEQDNLYESNE. Basic and acidic residues predominate over residues 194-208; the sequence is EGSKNTCDHKEEKSP. The Nuclear localization signal signature appears at 210 to 213; the sequence is KKPR. The myb-like GARP DNA-binding region spans 213–268; the sequence is RMQWTPELHHKFEVAVEKMGSLEKAFPKTILKYMQEELNVQGLTRNNVASHLQKYR.

The protein belongs to the ARR family. Type-B subfamily. Binds the target DNA as a monomer. Two-component system major event consists of a His-to-Asp phosphorelay between a sensor histidine kinase (HK) and a response regulator (RR). In plants, the His-to-Asp phosphorelay involves an additional intermediate named Histidine-containing phosphotransfer protein (HPt). This multistep phosphorelay consists of a His-Asp-His-Asp sequential transfer of a phosphate group between first a His and an Asp of the HK protein, followed by the transfer to a conserved His of the HPt protein and finally the transfer to an Asp in the receiver domain of the RR protein. As to expression, predominantly expressed in mature pistil tip. Also detected in the shoot apical meristem as well as vascular tissue and hydathodes of the leaves.

The protein localises to the nucleus. Functionally, putative transcriptional activator that binds specifically to the DNA sequence 5'-[AG]GATT-3'. Functions as a response regulator involved in His-to-Asp phosphorelay signal transduction system. Phosphorylation of the Asp residue in the receiver domain activates the ability of the protein to promote the transcription of target genes. Could directly activate some type-A response regulators in response to cytokinins. The chain is Putative two-component response regulator ARR20 (ARR20) from Arabidopsis thaliana (Mouse-ear cress).